A 341-amino-acid chain; its full sequence is L-amino acid-D/L-Glu epimerase (341 aa).

Substrate is bound by residues Thr132 and 157–159 (KIK). Mg(2+)-binding residues include Asp186, Glu212, and Asp237. Substrate is bound by residues Lys261 and 315 to 317 (DLD).

It belongs to the mandelate racemase/muconate lactonizing enzyme family. Requires Mg(2+) as cofactor.

Functionally, catalyzes the epimerization of dipeptides with L-Glu in the second position. Has epimerase activity with L-Gly-L-Glu, L-Ala-L-Glu, L-Ser-L-Glu, L-Pro-L-Glu, L-Val-L-Glu, L-Met-L-Glu, L-Thr-L-Glu and L-Phe-L-Glu (in vitro). This is L-amino acid-D/L-Glu epimerase from Sulfurimonas denitrificans (strain ATCC 33889 / DSM 1251) (Thiomicrospira denitrificans (strain ATCC 33889 / DSM 1251)).